The primary structure comprises 46 residues: Defensin-like protein 2 (46 aa).

4 cysteine pairs are disulfide-bonded: Cys3–Cys46, Cys13–Cys33, Cys19–Cys40, and Cys23–Cys42.

Monomer. In terms of tissue distribution, present in seeds, cotyledons and leaves. Not found in roots or stems.

Functionally, has antibacterial activity against the Gram-positive bacterium S.aureus and the Gram-negative bacteria E.coli and P.syringae. Does not have antibacterial activity against the phytopathogenic bacteria R.solanacearum, Rhataybacter sp and Erwinia sp. Does not inhibit trypsin, chymotrypsin or alpha-amylases. In Vigna unguiculata (Cowpea), this protein is Defensin-like protein 2.